The primary structure comprises 1149 residues: Protein deacetylase HDAC6 (1149 aa).

The segment at 1–61 (MTSTGQDSST…KGKMKKLSQP (61 aa)) is disordered. A compositionally biased stretch (polar residues) spans 18–29 (NPQSPLQESSAT). Ser-21 carries the post-translational modification Phosphoserine. Arg-32 is subject to Omega-N-methylarginine. At Ser-43 the chain carries Phosphoserine. The Nuclear export signal signature appears at 66-75 (LVVGLQGLDL). Histone deacetylase regions lie at residues 87–403 (LVFD…TLLG) and 481–799 (GLVY…SLLG). His-215 functions as the 1 in the catalytic mechanism. Residue His-610 is the 2 of the active site. The tract at residues 954-975 (ALGETEPTPPASHTNKQTTGAS) is disordered. Phosphothreonine is present on residues Thr-958, Thr-961, Thr-967, and Thr-971. Polar residues predominate over residues 964–975 (ASHTNKQTTGAS). Ser-975 carries the phosphoserine modification. A UBP-type zinc finger spans residues 1045–1143 (SWCPHLMAVC…NAAHQNKFGE (99 aa)). Positions 1047, 1049, 1067, 1070, 1079, 1082, and 1087 each coordinate Zn(2+). The tract at residues 1088-1090 (SRY) is ubiquitin binding. Residues His-1094, His-1098, His-1104, Cys-1117, and Cys-1120 each coordinate Zn(2+). The interval 1116-1123 (WCYVCQAY) is ubiquitin binding. Phosphoserine is present on Ser-1148.

The protein belongs to the histone deacetylase family. HD type 2 subfamily. Forms a trimeric complex in the nucleus consisting of BANP, HDAC6 and KHDRBS1/SAM68; HDAC6 keeps KHDRBS1 in a deacetylated state which inhibits the inclusion of CD44 alternate exons. The complex is disrupted by MAPK1/MAPK3-mediated phosphorylation of BANP which results in BANP export to the cytoplasm. This facilitates acetylation of KHDRBS1 and CD44 variant exon inclusion. Interacts with SIRT2 (via both phosphorylated, unphosphorylated, active or inactive forms); the interaction is necessary for the complex to interact with alpha-tubulin. Under proteasome impairment conditions, interacts with UBD via its histone deacetylase 1 and UBP-type zinc-finger regions. Interacts with BBIP1, CBFA2T3, CYLD, DDIT3/CHOP, ZMYND15, F-actin and HDAC11. Interacts with RIPOR2; this interaction occurs during early myogenic differentiation and prevents HDAC6 to deacetylate tubulin. Interacts with AURKA; AURKA-mediated phosphorylation of HDAC6 promotes deacetylation of alpha-tubulin. Interacts with DYSF; this interaction occurs during early myogenic differentiation. Interacts with TPPP; inhibiting the tubulin deacetylase activity of HDAC6. Interacts with DYNLL1. Interacts with ATP13A2; the interaction results in recruitment of HDAC6 to lysosomes to promote CTTN deacetylation. Interacts with CCDC141 (via the N-terminal region); inhibiting the deacetylase activity of HDAC6. Interacts with IPO7; the interaction facilitates HDAC6 nuclear translocation in dental papilla cells. Zn(2+) is required as a cofactor. Phosphorylated by AURKA; phosphorylation increases HDAC6-mediated deacetylation of alpha-tubulin and subsequent disassembly of cilia. In terms of processing, ubiquitinated. Its polyubiquitination however does not lead to its degradation. Post-translationally, sumoylated in vitro. In terms of tissue distribution, expressed in neurons of the cortex. Expressed in Purkinje cells. Detected in keratinocytes (at protein level).

The protein localises to the cytoplasm. It is found in the cytoskeleton. Its subcellular location is the nucleus. The protein resides in the perikaryon. It localises to the cell projection. The protein localises to the dendrite. It is found in the axon. Its subcellular location is the cilium. The protein resides in the microtubule organizing center. It localises to the centrosome. The protein localises to the cilium basal body. The catalysed reaction is N(6)-acetyl-L-lysyl-[protein] + H2O = L-lysyl-[protein] + acetate. It carries out the reaction N(6)-acetyl-L-lysyl-[alpha-tubulin] + H2O = L-lysyl-[alpha-tubulin] + acetate. Its pathway is protein modification; protein ubiquitination. Its function is as follows. Deacetylates a wide range of non-histone substrates. Plays a central role in microtubule-dependent cell motility by mediating deacetylation of tubulin. Required for cilia disassembly via deacetylation of alpha-tubulin. Alpha-tubulin deacetylation results in destabilization of dynamic microtubules. Promotes deacetylation of CTTN, leading to actin polymerization, promotion of autophagosome-lysosome fusion and completion of autophagy. Deacetylates SQSTM1. Deacetylates peroxiredoxins PRDX1 and PRDX2, decreasing their reducing activity. Deacetylates antiviral protein RIGI in the presence of viral mRNAs which is required for viral RNA detection by RIGI. Sequentially deacetylates and polyubiquitinates DNA mismatch repair protein MSH2 which leads to MSH2 degradation, reducing cellular sensitivity to DNA-damaging agents and decreasing cellular DNA mismatch repair activities. Deacetylates DNA mismatch repair protein MLH1 which prevents recruitment of the MutL alpha complex (formed by the MLH1-PMS2 heterodimer) to the MutS alpha complex (formed by the MSH2-MSH6 heterodimer), leading to tolerance of DNA damage. Deacetylates RHOT1/MIRO1 which blocks mitochondrial transport and mediates axon growth inhibition. Deacetylates transcription factor SP1 which leads to increased expression of ENG, positively regulating angiogenesis. Deacetylates KHDRBS1/SAM68 which regulates alternative splicing by inhibiting the inclusion of CD44 alternate exons. Promotes odontoblast differentiation following IPO7-mediated nuclear import and subsequent repression of RUNX2 expression. In addition to its protein deacetylase activity, plays a key role in the degradation of misfolded proteins: when misfolded proteins are too abundant to be degraded by the chaperone refolding system and the ubiquitin-proteasome, mediates the transport of misfolded proteins to a cytoplasmic juxtanuclear structure called aggresome. Probably acts as an adapter that recognizes polyubiquitinated misfolded proteins and target them to the aggresome, facilitating their clearance by autophagy. In Mus musculus (Mouse), this protein is Protein deacetylase HDAC6.